Here is a 279-residue protein sequence, read N- to C-terminus: Zinc finger CCCH domain-containing protein 42 (279 aa).

Residues 11–77 (SDHRSSSTPM…KAAVEPQEYP (67 aa)) form a disordered region. Residues 16 to 39 (SSTPMATTTSSSASDPAAISPTPS) are compositionally biased toward low complexity. 3 C3H1-type zinc fingers span residues 79 to 107 (RPGV…HPAK), 120 to 148 (RPGE…HPPD), and 186 to 214 (RPGT…HPNS).

The sequence is that of Zinc finger CCCH domain-containing protein 42 from Oryza sativa subsp. japonica (Rice).